We begin with the raw amino-acid sequence, 500 residues long: Intermediate filament protein ifc-1 (500 aa).

A head region spans residues 1–36 (MSLYGGIPTNLVSGMSSAGAICTTQIRDAREREKRE). In terms of domain architecture, IF rod spans 33 to 383 (EKREIGLLND…VLLNGANVTT (351 aa)). Residues 37–68 (IGLLNDRLADYIEKVRFLKAQNHVLSHDIEIL) form a coil 1A region. The interval 69–81 (RRGFSGGGHISSF) is linker 1. The tract at residues 82 to 219 (FESEISNCTV…TENSSRIEQE (138 aa)) is coil 1B. Residues 220–237 (LIYIHRDTTLENRDYFRQ) form a linker 12 region. The tract at residues 238-383 (ELQAAMRDIR…VLLNGANVTT (146 aa)) is coil 2. A tail region spans residues 384–496 (YVSNSTGAAG…RHHESSYSYS (113 aa)).

It belongs to the intermediate filament family.

Its subcellular location is the cytoplasm. Cytoplasmic intermediate filaments provide mechanical strength to cells. Not essential protein. This chain is Intermediate filament protein ifc-1 (ifc-1), found in Caenorhabditis elegans.